The primary structure comprises 38 residues: MKVRASVKKLCRNCKIVKRDGVIRVICSAEPKHKQRQG.

This sequence belongs to the bacterial ribosomal protein bL36 family.

The protein is Large ribosomal subunit protein bL36A of Cronobacter sakazakii (strain ATCC BAA-894) (Enterobacter sakazakii).